The primary structure comprises 321 residues: MESSFTQKDMLAQVNQLWSMLDDMAENSPESYQKFIQRHMKEGKEFMTPPEPNLCIHTKILEPDEKILFINICQWNRVPAPMSEAHPVPISAGQLENLSDGTVVAIAYNPEVLKRAHQDHVELDQLIRLAMKYIEEQYQITLCHSYHVAPFQLKGNAKMMKESLERIQKQPATNKGNSSCATDNSLLEELKSIALIREKQETSPSICITREDAPKSTKTKLIEEISSTDLQNRDLLPSPWHELSVTKDNAGHPQSLILKVKLRGVHSVAECDLSVSKDDLLLVVPGRYRLLLNLPQAVNEETVAAKFNKANYILLVTMPTL.

It belongs to the PIH1 family.

The polypeptide is PIH1 domain-containing protein 2 (pih1d2) (Xenopus tropicalis (Western clawed frog)).